Reading from the N-terminus, the 724-residue chain is Phosphoribosylformylglycinamidine synthase subunit PurL (724 aa).

Residue His-34 is part of the active site. Tyr-37 lines the ATP pocket. Residue Glu-78 coordinates Mg(2+). Substrate-binding positions include 79 to 82 (SHNH) and Arg-101. His-80 (proton acceptor) is an active-site residue. Asp-102 is a binding site for Mg(2+). Gln-226 is a binding site for substrate. A Mg(2+)-binding site is contributed by Asp-254. Substrate is bound at residue 298–300 (ESQ). ATP-binding residues include Asp-480 and Gly-517. Asn-518 provides a ligand contact to Mg(2+). A substrate-binding site is contributed by Ser-520.

Belongs to the FGAMS family. As to quaternary structure, monomer. Part of the FGAM synthase complex composed of 1 PurL, 1 PurQ and 2 PurS subunits.

The protein resides in the cytoplasm. It catalyses the reaction N(2)-formyl-N(1)-(5-phospho-beta-D-ribosyl)glycinamide + L-glutamine + ATP + H2O = 2-formamido-N(1)-(5-O-phospho-beta-D-ribosyl)acetamidine + L-glutamate + ADP + phosphate + H(+). Its pathway is purine metabolism; IMP biosynthesis via de novo pathway; 5-amino-1-(5-phospho-D-ribosyl)imidazole from N(2)-formyl-N(1)-(5-phospho-D-ribosyl)glycinamide: step 1/2. Functionally, part of the phosphoribosylformylglycinamidine synthase complex involved in the purines biosynthetic pathway. Catalyzes the ATP-dependent conversion of formylglycinamide ribonucleotide (FGAR) and glutamine to yield formylglycinamidine ribonucleotide (FGAM) and glutamate. The FGAM synthase complex is composed of three subunits. PurQ produces an ammonia molecule by converting glutamine to glutamate. PurL transfers the ammonia molecule to FGAR to form FGAM in an ATP-dependent manner. PurS interacts with PurQ and PurL and is thought to assist in the transfer of the ammonia molecule from PurQ to PurL. This is Phosphoribosylformylglycinamidine synthase subunit PurL from Methanopyrus kandleri (strain AV19 / DSM 6324 / JCM 9639 / NBRC 100938).